Reading from the N-terminus, the 487-residue chain is Cobyric acid synthase (487 aa).

The 187-residue stretch at 249 to 435 (GIDIAIVRLP…IHGIFDEGDF (187 aa)) folds into the GATase cobBQ-type domain. Cysteine 330 (nucleophile) is an active-site residue. The active site involves histidine 427.

Belongs to the CobB/CobQ family. CobQ subfamily.

It functions in the pathway cofactor biosynthesis; adenosylcobalamin biosynthesis. Its function is as follows. Catalyzes amidations at positions B, D, E, and G on adenosylcobyrinic A,C-diamide. NH(2) groups are provided by glutamine, and one molecule of ATP is hydrogenolyzed for each amidation. The polypeptide is Cobyric acid synthase (Clostridium perfringens (strain ATCC 13124 / DSM 756 / JCM 1290 / NCIMB 6125 / NCTC 8237 / Type A)).